Here is a 150-residue protein sequence, read N- to C-terminus: 3-dehydroquinate dehydratase (150 aa).

Residue Tyr26 is the Proton acceptor of the active site. Substrate-binding residues include Asn77, His83, and Asp90. The Proton donor role is filled by His103. Residues 104–105 and Arg114 each bind substrate; that span reads LS.

Belongs to the type-II 3-dehydroquinase family. Homododecamer.

The catalysed reaction is 3-dehydroquinate = 3-dehydroshikimate + H2O. Its pathway is metabolic intermediate biosynthesis; chorismate biosynthesis; chorismate from D-erythrose 4-phosphate and phosphoenolpyruvate: step 3/7. Functionally, catalyzes a trans-dehydration via an enolate intermediate. This chain is 3-dehydroquinate dehydratase, found in Photorhabdus laumondii subsp. laumondii (strain DSM 15139 / CIP 105565 / TT01) (Photorhabdus luminescens subsp. laumondii).